The sequence spans 840 residues: Protein translocase subunit SecA (840 aa).

Residues Gln85, 103–107 (GEGKT), and Asp492 each bind ATP. The interval 787–821 (QRERVAKETGASHGGDSQEIKKKPVKKEPKVGRND) is disordered. The span at 802-819 (DSQEIKKKPVKKEPKVGR) shows a compositional bias: basic and acidic residues. Zn(2+) is bound by residues Cys823, Cys825, Cys834, and Cys835.

This sequence belongs to the SecA family. In terms of assembly, monomer and homodimer. Part of the essential Sec protein translocation apparatus which comprises SecA, SecYEG and auxiliary proteins SecDF. Other proteins may also be involved. Zn(2+) is required as a cofactor.

The protein localises to the cell membrane. It localises to the cytoplasm. The catalysed reaction is ATP + H2O + cellular proteinSide 1 = ADP + phosphate + cellular proteinSide 2.. Part of the Sec protein translocase complex. Interacts with the SecYEG preprotein conducting channel. Has a central role in coupling the hydrolysis of ATP to the transfer of proteins into and across the cell membrane, serving as an ATP-driven molecular motor driving the stepwise translocation of polypeptide chains across the membrane. This Clostridium perfringens (strain 13 / Type A) protein is Protein translocase subunit SecA.